Reading from the N-terminus, the 77-residue chain is Acyl carrier protein (77 aa).

Residues 3-77 form the Carrier domain; the sequence is QEIFEKVKKI…GKAVEHIESK (75 aa). Serine 38 bears the O-(pantetheine 4'-phosphoryl)serine mark.

The protein belongs to the acyl carrier protein (ACP) family. Post-translationally, 4'-phosphopantetheine is transferred from CoA to a specific serine of apo-ACP by AcpS. This modification is essential for activity because fatty acids are bound in thioester linkage to the sulfhydryl of the prosthetic group.

It localises to the cytoplasm. Its pathway is lipid metabolism; fatty acid biosynthesis. Carrier of the growing fatty acid chain in fatty acid biosynthesis. In Synechocystis sp. (strain ATCC 27184 / PCC 6803 / Kazusa), this protein is Acyl carrier protein.